Reading from the N-terminus, the 597-residue chain is Alpha-1,2-mannosyltransferase MNN2 (597 aa).

Topologically, residues M1–K12 are cytoplasmic. The chain crosses the membrane as a helical; Signal-anchor for type II membrane protein span at residues L13–N28. At K29 to K597 the chain is on the extracellular side. 3 N-linked (GlcNAc...) asparagine glycosylation sites follow: N34, N363, and N473.

The protein belongs to the MNN1/MNT family. Interacts with SVP26.

It localises to the golgi apparatus membrane. It participates in protein modification; protein glycosylation. In terms of biological role, alpha-1,2-mannosyltransferase, responsible for addition of the first alpha-1,2-linked mannose to form the branches on the mannan backbone of oligosaccharides. This is Alpha-1,2-mannosyltransferase MNN2 (MNN2) from Saccharomyces cerevisiae (strain ATCC 204508 / S288c) (Baker's yeast).